An 832-amino-acid polypeptide reads, in one-letter code: DEAD-box ATP-dependent RNA helicase 13 (832 aa).

The span at methionine 1–glutamine 12 shows a compositional bias: pro residues. Disordered regions lie at residues methionine 1–glutamate 59 and valine 91–valine 173. Over residues arginine 29 to arginine 42 the composition is skewed to basic residues. Residues alanine 43–glycine 55 are compositionally biased toward low complexity. Basic residues predominate over residues glutamine 105–lysine 114. The span at leucine 128–glutamate 137 shows a compositional bias: acidic residues. A compositionally biased stretch (basic residues) spans lysine 141–valine 155. Positions lysine 156–aspartate 167 are enriched in basic and acidic residues. A Q motif motif is present at residues tyrosine 198–lysine 226. Residues proline 230–lysine 447 form the Helicase ATP-binding domain. Residue alanine 243 to threonine 250 coordinates ATP. Residues aspartate 371 to aspartate 374 carry the DEAD box motif. The Helicase C-terminal domain maps to lysine 484–proline 645. The segment at arginine 800–aspartate 832 is disordered. Residues lysine 814 to aspartate 832 show a composition bias toward basic and acidic residues.

This sequence belongs to the DEAD box helicase family. DDX24/MAK5 subfamily.

It carries out the reaction ATP + H2O = ADP + phosphate + H(+). The sequence is that of DEAD-box ATP-dependent RNA helicase 13 from Oryza sativa subsp. japonica (Rice).